Consider the following 238-residue polypeptide: 4-hydroxy-tetrahydrodipicolinate reductase (238 aa).

Residue 12-17 participates in NAD(+) binding; sequence GASGRM. Arg40 lines the NADP(+) pocket. Residues 93-95 and 117-120 contribute to the NAD(+) site; these read GTT and ASNF. His149 functions as the Proton donor/acceptor in the catalytic mechanism. His150 contacts (S)-2,3,4,5-tetrahydrodipicolinate. Catalysis depends on Lys153, which acts as the Proton donor. A (S)-2,3,4,5-tetrahydrodipicolinate-binding site is contributed by 159-160; sequence GT.

Belongs to the DapB family.

The protein localises to the cytoplasm. It catalyses the reaction (S)-2,3,4,5-tetrahydrodipicolinate + NAD(+) + H2O = (2S,4S)-4-hydroxy-2,3,4,5-tetrahydrodipicolinate + NADH + H(+). It carries out the reaction (S)-2,3,4,5-tetrahydrodipicolinate + NADP(+) + H2O = (2S,4S)-4-hydroxy-2,3,4,5-tetrahydrodipicolinate + NADPH + H(+). The protein operates within amino-acid biosynthesis; L-lysine biosynthesis via DAP pathway; (S)-tetrahydrodipicolinate from L-aspartate: step 4/4. Its function is as follows. Catalyzes the conversion of 4-hydroxy-tetrahydrodipicolinate (HTPA) to tetrahydrodipicolinate. This is 4-hydroxy-tetrahydrodipicolinate reductase from Xanthomonas axonopodis pv. citri (strain 306).